An 86-amino-acid chain; its full sequence is MANIKSAKKRAITSEKNRQHNASRRSMMRTYFKKVIVAIEAGDKEAAQQAFSVATPILDRYATKGLIHKNKAARHKSRIAAKIKAL.

Residues 1–11 (MANIKSAKKRA) show a composition bias toward basic residues. Residues 1–26 (MANIKSAKKRAITSEKNRQHNASRRS) are disordered.

It belongs to the bacterial ribosomal protein bS20 family.

Binds directly to 16S ribosomal RNA. The chain is Small ribosomal subunit protein bS20 from Pseudoalteromonas translucida (strain TAC 125).